Consider the following 158-residue polypeptide: Transcriptional repressor NrdR (158 aa).

A zinc finger lies at 3-34; sequence CPYCGYPDSRVIDSRPTDDNTAIRRRRECLKC. The ATP-cone domain maps to 49-139; it reads ILVIKKDNRR…VYRQFKDINT (91 aa).

The protein belongs to the NrdR family. It depends on Zn(2+) as a cofactor.

Functionally, negatively regulates transcription of bacterial ribonucleotide reductase nrd genes and operons by binding to NrdR-boxes. This chain is Transcriptional repressor NrdR, found in Caldanaerobacter subterraneus subsp. tengcongensis (strain DSM 15242 / JCM 11007 / NBRC 100824 / MB4) (Thermoanaerobacter tengcongensis).